Here is a 339-residue protein sequence, read N- to C-terminus: Phenylalanine--tRNA ligase alpha subunit (339 aa).

Residues 1–14 (MEAKLKQLEEKAKQ) show a composition bias toward basic and acidic residues. A disordered region spans residues 1–20 (MEAKLKQLEEKAKQDIQAST). Residue glutamate 254 coordinates Mg(2+).

Belongs to the class-II aminoacyl-tRNA synthetase family. Phe-tRNA synthetase alpha subunit type 1 subfamily. As to quaternary structure, tetramer of two alpha and two beta subunits. Mg(2+) serves as cofactor.

The protein resides in the cytoplasm. The catalysed reaction is tRNA(Phe) + L-phenylalanine + ATP = L-phenylalanyl-tRNA(Phe) + AMP + diphosphate + H(+). The polypeptide is Phenylalanine--tRNA ligase alpha subunit (Alkaliphilus metalliredigens (strain QYMF)).